Consider the following 133-residue polypeptide: Small ribosomal subunit protein uS8 (133 aa).

The protein belongs to the universal ribosomal protein uS8 family. As to quaternary structure, part of the 30S ribosomal subunit.

Functionally, one of the primary rRNA binding proteins, it binds directly to 16S rRNA central domain where it helps coordinate assembly of the platform of the 30S subunit. The protein is Small ribosomal subunit protein uS8 of Staphylothermus marinus (strain ATCC 43588 / DSM 3639 / JCM 9404 / F1).